A 179-amino-acid chain; its full sequence is Shikimate kinase (179 aa).

15–20 (GAGKTS) serves as a coordination point for ATP. Thr19 is a binding site for Mg(2+). Residues Asp37, Arg61, and Gly83 each contribute to the substrate site. Arg123 lines the ATP pocket. A substrate-binding site is contributed by Arg142.

This sequence belongs to the shikimate kinase family. As to quaternary structure, monomer. It depends on Mg(2+) as a cofactor.

The protein resides in the cytoplasm. The enzyme catalyses shikimate + ATP = 3-phosphoshikimate + ADP + H(+). It functions in the pathway metabolic intermediate biosynthesis; chorismate biosynthesis; chorismate from D-erythrose 4-phosphate and phosphoenolpyruvate: step 5/7. Its function is as follows. Catalyzes the specific phosphorylation of the 3-hydroxyl group of shikimic acid using ATP as a cosubstrate. The sequence is that of Shikimate kinase from Coxiella burnetii (strain CbuG_Q212) (Coxiella burnetii (strain Q212)).